A 446-amino-acid polypeptide reads, in one-letter code: Citrate/sodium symporter (446 aa).

5 helical membrane passes run 23–43 (IFGMPLPLYAFALITLLLSHF), 46–66 (AIPTDLVGGFALMFVMGAIFG), 79–99 (IGGAPVMIFLVAAYFVYAGIF), 110–130 (VMDKSNFLNLFIAVLITGAIL), and 148–168 (ILAGIVGASLFGIVIGLCFGI). Na(+) is bound by residues Ile181 and Gly183. Citrate is bound by residues Asn186 and Gly187. Helical transmembrane passes span 213 to 233 (IAILTIANIFAIIFAALLDMI), 267 to 287 (ETAVGMVLSTTCFLLAYVVAK), 289 to 309 (ILPSIGGVSIHYFAWMVLIVA), 335 to 355 (QLLWVLMVGVGVCYTDLQEII), and 364 to 384 (VIAAIIVVGAVVGAAIGGWLI). Met399 and Asn401 together coordinate Na(+). Citrate-binding residues include Arg402, Gly404, Ser405, and Arg428. Residues 425–445 (ISSRLGGGIVLVIASIVFSMM) traverse the membrane as a helical segment.

It belongs to the 2-hydroxycarboxylate transporter (2-HCT) (TC 2.A.24) family. As to quaternary structure, homodimer.

The protein localises to the cell inner membrane. The catalysed reaction is citrate(out) + 2 Na(+)(out) = citrate(in) + 2 Na(+)(in). In terms of biological role, secondary active transporter that catalyzes the uptake of citrate across the membrane with the concomitant uptake of sodium. Is specific for citrate. The chain is Citrate/sodium symporter from Salmonella pullorum.